Consider the following 299-residue polypeptide: ATP phosphoribosyltransferase (299 aa).

This sequence belongs to the ATP phosphoribosyltransferase family. Long subfamily. In terms of assembly, equilibrium between an active dimeric form, an inactive hexameric form and higher aggregates. Interconversion between the various forms is largely reversible and is influenced by the natural substrates and inhibitors of the enzyme. It depends on Mg(2+) as a cofactor.

It is found in the cytoplasm. It catalyses the reaction 1-(5-phospho-beta-D-ribosyl)-ATP + diphosphate = 5-phospho-alpha-D-ribose 1-diphosphate + ATP. It participates in amino-acid biosynthesis; L-histidine biosynthesis; L-histidine from 5-phospho-alpha-D-ribose 1-diphosphate: step 1/9. Feedback inhibited by histidine. Catalyzes the condensation of ATP and 5-phosphoribose 1-diphosphate to form N'-(5'-phosphoribosyl)-ATP (PR-ATP). Has a crucial role in the pathway because the rate of histidine biosynthesis seems to be controlled primarily by regulation of HisG enzymatic activity. The protein is ATP phosphoribosyltransferase of Buchnera aphidicola subsp. Diuraphis noxia.